We begin with the raw amino-acid sequence, 208 residues long: MGNELQLENKILKGTTTVGIRVNDGVILAADRRASAGFFVANKMVRKVLYITDKIGITTAGSVADLQFIYDVLKNIYHYNSITKYGPISIKGIATRLANVLSATKYFPYIVQILIGGYDDQPRLFNLDYLGDITEENYVATGSGSPVAMGVLEDEYNPKMTLDEAADLAKRAVFSAIKRDSFTGTGVIVAKIHSKGHEELEFYLNKKM.

Residues 1–14 constitute a propeptide, removed in mature form; by autocatalysis; it reads MGNELQLENKILKG. T15 functions as the Nucleophile in the catalytic mechanism.

It belongs to the peptidase T1B family. As to quaternary structure, the 20S proteasome core is composed of 14 alpha and 14 beta subunits that assemble into four stacked heptameric rings, resulting in a barrel-shaped structure. The two inner rings, each composed of seven catalytic beta subunits, are sandwiched by two outer rings, each composed of seven alpha subunits. The catalytic chamber with the active sites is on the inside of the barrel. Has a gated structure, the ends of the cylinder being occluded by the N-termini of the alpha-subunits. Is capped at one or both ends by the proteasome regulatory ATPase, PAN.

The protein localises to the cytoplasm. It carries out the reaction Cleavage of peptide bonds with very broad specificity.. With respect to regulation, the formation of the proteasomal ATPase PAN-20S proteasome complex, via the docking of the C-termini of PAN into the intersubunit pockets in the alpha-rings, triggers opening of the gate for substrate entry. Interconversion between the open-gate and close-gate conformations leads to a dynamic regulation of the 20S proteasome proteolysis activity. Its function is as follows. Component of the proteasome core, a large protease complex with broad specificity involved in protein degradation. The sequence is that of Proteasome subunit beta 2 from Saccharolobus solfataricus (strain ATCC 35092 / DSM 1617 / JCM 11322 / P2) (Sulfolobus solfataricus).